The chain runs to 147 residues: Deoxyuridine 5'-triphosphate nucleotidohydrolase (147 aa).

Substrate-binding positions include 63 to 65, N76, and 80 to 82; these read RSG and TID.

The protein belongs to the dUTPase family. The cofactor is Mg(2+).

It catalyses the reaction dUTP + H2O = dUMP + diphosphate + H(+). It participates in pyrimidine metabolism; dUMP biosynthesis; dUMP from dCTP (dUTP route): step 2/2. In terms of biological role, this enzyme is involved in nucleotide metabolism: it produces dUMP, the immediate precursor of thymidine nucleotides and it decreases the intracellular concentration of dUTP so that uracil cannot be incorporated into DNA. The chain is Deoxyuridine 5'-triphosphate nucleotidohydrolase from Chlamydia felis (strain Fe/C-56) (Chlamydophila felis).